The chain runs to 204 residues: uncharacterized protein (204 aa).

The interval 47–108 (TDSSDDEGGA…EDSDEEGEGG (62 aa)) is disordered. The segment covering 49-106 (SSDDEGGASSGDEGEASSDDEGDASSDDEEEASSDGEGVVEDEETLDAEGEDSDEEGE) has biased composition (acidic residues).

The protein localises to the mitochondrion. This is an uncharacterized protein from Paramecium tetraurelia.